A 1801-amino-acid polypeptide reads, in one-letter code: Protein mono-ADP-ribosyltransferase PARP14 (1801 aa).

Residue S33 is modified to Phosphoserine. Residues 109-132 (SKTKEDVKEPDVSEELDTKLPLDG) are disordered. Macro domains lie at 791–978 (KCFS…KTVF), 1003–1190 (WEKG…ARRA), and 1216–1387 (DSGV…KKRE). A glycoprotein is bound by residues N824, L833, 922 to 926 (SSGVF), D961, 1023 to 1024 (VQ), S1034, 1046 to 1049 (LSKS), 1133 to 1137 (GTGNL), 1175 to 1178 (DHEN), 1235 to 1236 (DI), S1247, V1258, 1332 to 1336 (GTGNA), and F1371. A phosphoserine mark is found at S1403 and S1411. The region spanning 1523-1601 (EQESRADCIS…SLSVQRLTKS (79 aa)) is the WWE domain. Positions 1605–1801 (IPAHWSDMKQ…YPEYLITFRK (197 aa)) constitute a PARP catalytic domain.

Belongs to the ARTD/PARP family. In terms of assembly, interacts with STAT6. Interacts with PARP10. Interacts with PARP9 in IFNG-stimulated macrophages; the interaction prevents PARP14-mediated STAT1 and STAT6 ADP-riboslylation. Auto-ADP-ribosylated. Expressed in macrophages.

It localises to the nucleus. Its subcellular location is the cytoplasm. It catalyses the reaction L-glutamyl-[protein] + NAD(+) = 5-O-(ADP-D-ribosyl)-L-glutamyl-[protein] + nicotinamide. Functionally, ADP-ribosyltransferase that mediates mono-ADP-ribosylation of glutamate residues on target proteins. In contrast to PARP1 and PARP2, it is not able to mediate poly-ADP-ribosylation. Has been shown to catalyze the mono-ADP-ribosylation of STAT1 at 'Glu-657' and 'Glu-705', thus decreasing STAT1 phosphorylation which negatively regulates pro-inflammatory cytokine production in macrophages in response to IFNG stimulation. However, the role of ADP-ribosylation in the prevention of STAT1 phosphorylation has been called into question and it has been suggested that the inhibition of phosphorylation may be the result of sumoylation of STAT1 'Lys-703'. Mono-ADP-ribosylates STAT6; enhancing STAT6-dependent transcription. In macrophages, positively regulates MRC1 expression in response to IL4 stimulation by promoting STAT6 phosphorylation. Mono-ADP-ribosylates PARP9. This is Protein mono-ADP-ribosyltransferase PARP14 from Homo sapiens (Human).